A 269-amino-acid chain; its full sequence is Centromere protein K (269 aa).

The span at 1–10 (MNQEDLDPDS) shows a compositional bias: acidic residues. The tract at residues 1-20 (MNQEDLDPDSTTDVGDVTNT) is disordered. Coiled-coil stretches lie at residues 22–42 (EELI…QNKL) and 98–151 (QKLR…NKVE).

It belongs to the CENP-K/MCM22 family. As to quaternary structure, component of the CENPA-CAD complex, composed of CENPI, CENPK, CENPL, CENPO, CENPP, CENPQ, CENPR and CENPS. The CENPA-CAD complex interacts with the CENPA-NAC complex, at least composed of CENPA, CENPC, CENPH, CENPM, CENPN, CENPT and CENPU. Interacts directly with CENPH. In terms of tissue distribution, detected in several fetal organs with highest levels in fetal liver. In adults, it is weakly expressed in lung and placenta.

The protein localises to the nucleus. It is found in the chromosome. Its subcellular location is the centromere. The protein resides in the kinetochore. Its function is as follows. Component of the CENPA-CAD (nucleosome distal) complex, a complex recruited to centromeres which is involved in assembly of kinetochore proteins, mitotic progression and chromosome segregation. May be involved in incorporation of newly synthesized CENPA into centromeres via its interaction with the CENPA-NAC complex. Acts in coordination with KNL1 to recruit the NDC80 complex to the outer kinetochore. The polypeptide is Centromere protein K (CENPK) (Homo sapiens (Human)).